Consider the following 278-residue polypeptide: 3-methyl-2-oxobutanoate hydroxymethyltransferase (278 aa).

The Mg(2+) site is built by Asp-44 and Asp-83. 3-methyl-2-oxobutanoate is bound by residues 44–45 (DS), Asp-83, and Lys-112. Glu-114 provides a ligand contact to Mg(2+). Glu-181 serves as the catalytic Proton acceptor.

The protein belongs to the PanB family. Homodecamer; pentamer of dimers. Mg(2+) serves as cofactor.

The protein resides in the cytoplasm. The enzyme catalyses 3-methyl-2-oxobutanoate + (6R)-5,10-methylene-5,6,7,8-tetrahydrofolate + H2O = 2-dehydropantoate + (6S)-5,6,7,8-tetrahydrofolate. The protein operates within cofactor biosynthesis; (R)-pantothenate biosynthesis; (R)-pantoate from 3-methyl-2-oxobutanoate: step 1/2. Catalyzes the reversible reaction in which hydroxymethyl group from 5,10-methylenetetrahydrofolate is transferred onto alpha-ketoisovalerate to form ketopantoate. This chain is 3-methyl-2-oxobutanoate hydroxymethyltransferase, found in Roseiflexus sp. (strain RS-1).